A 241-amino-acid chain; its full sequence is Small ribosomal subunit protein eS4 (241 aa).

Residues 37–99 (IPLGLLLRDY…ADLYLRIVPD (63 aa)) form the S4 RNA-binding domain.

The protein belongs to the eukaryotic ribosomal protein eS4 family.

This is Small ribosomal subunit protein eS4 from Metallosphaera sedula (strain ATCC 51363 / DSM 5348 / JCM 9185 / NBRC 15509 / TH2).